The sequence spans 397 residues: Tryptophan synthase beta chain (397 aa).

Lys-87 carries the post-translational modification N6-(pyridoxal phosphate)lysine.

Belongs to the TrpB family. Tetramer of two alpha and two beta chains. The cofactor is pyridoxal 5'-phosphate.

The catalysed reaction is (1S,2R)-1-C-(indol-3-yl)glycerol 3-phosphate + L-serine = D-glyceraldehyde 3-phosphate + L-tryptophan + H2O. The protein operates within amino-acid biosynthesis; L-tryptophan biosynthesis; L-tryptophan from chorismate: step 5/5. The beta subunit is responsible for the synthesis of L-tryptophan from indole and L-serine. This Enterobacter sp. (strain 638) protein is Tryptophan synthase beta chain.